The chain runs to 498 residues: L-xylulose/3-keto-L-gulonate kinase (498 aa).

It belongs to the FGGY kinase family. In terms of assembly, homodimer.

It catalyses the reaction L-xylulose + ATP = L-xylulose 5-phosphate + ADP + H(+). The enzyme catalyses 3-dehydro-L-gulonate + ATP = 3-dehydro-L-gulonate 6-phosphate + ADP + H(+). Its function is as follows. Catalyzes the phosphorylation of L-xylulose and 3-keto-L-gulonate. Is involved in L-lyxose utilization via xylulose, and may also be involved in the utilization of 2,3-diketo-L-gulonate. The sequence is that of L-xylulose/3-keto-L-gulonate kinase (lyx) from Escherichia coli (strain K12).